Here is a 664-residue protein sequence, read N- to C-terminus: Alpha-1,4-glucan:maltose-1-phosphate maltosyltransferase (664 aa).

Lys261, Gln321, and Asp356 together coordinate alpha-maltose 1-phosphate. Catalysis depends on Asp393, which acts as the Nucleophile. Asn394 is a binding site for alpha-maltose 1-phosphate. Residue Glu422 is the Proton donor of the active site. Residue 533 to 534 participates in alpha-maltose 1-phosphate binding; sequence KY.

Belongs to the glycosyl hydrolase 13 family. GlgE subfamily. Homodimer.

It carries out the reaction alpha-maltose 1-phosphate + [(1-&gt;4)-alpha-D-glucosyl](n) = [(1-&gt;4)-alpha-D-glucosyl](n+2) + phosphate. Its function is as follows. Maltosyltransferase that uses maltose 1-phosphate (M1P) as the sugar donor to elongate linear or branched alpha-(1-&gt;4)-glucans. Is involved in a branched alpha-glucan biosynthetic pathway from trehalose, together with TreS, Mak and GlgB. This chain is Alpha-1,4-glucan:maltose-1-phosphate maltosyltransferase, found in Pseudomonas aeruginosa (strain ATCC 15692 / DSM 22644 / CIP 104116 / JCM 14847 / LMG 12228 / 1C / PRS 101 / PAO1).